A 176-amino-acid chain; its full sequence is Neuropeptide-like protein 1 (176 aa).

An N-terminal signal peptide occupies residues 1-19 (MKATFVLACLLVIAAVSHA). The interval 59-79 (GKRSAEQNEQANKEDKATSDK) is disordered. Residues 61–79 (RSAEQNEQANKEDKATSDK) show a composition bias toward basic and acidic residues.

Functionally, in AWC olfactory sensory neurons, required for the detection of preferred food sources. The protein is Neuropeptide-like protein 1 (nlp-1) of Caenorhabditis elegans.